Consider the following 573-residue polypeptide: Solute carrier family 41 member 2 (573 aa).

Topologically, residues 1-162 are extracellular; it reads MTNSKGRSIT…KESSGIMALQ (162 aa). A phosphoserine mark is found at Ser-136 and Ser-137. A helical membrane pass occupies residues 163-183; that stretch reads ILVPFLLAGFGTVSAGMVLDI. Over 184–195 the chain is Cytoplasmic; that stretch reads VQHWEVFRKVTE. The chain crosses the membrane as a helical span at residues 196-216; that stretch reads VFILVPALLGLKGNLEMTLAS. The Extracellular segment spans residues 217–245; sequence RLSTAVNIGKMDSPIEKWNLIIGNLALKQ. A helical membrane pass occupies residues 246–266; the sequence is VQATVVGFLAAVAAIILGWIP. The Cytoplasmic portion of the chain corresponds to 267-282; it reads EGKYYLDHSILLCSSS. A helical transmembrane segment spans residues 283–303; sequence VATAFIASLLQGIIMVGVIVG. Residues 304–313 are Extracellular-facing; the sequence is SKKTGINPDN. Residues 314–334 form a helical membrane-spanning segment; that stretch reads VATPIAASFGDLITLAILAWI. Topologically, residues 335-347 are cytoplasmic; that stretch reads SQGLYSCLETYYY. Residues 348-368 form a helical membrane-spanning segment; sequence ISPLVGVFFLALTPIWIIIAA. Topologically, residues 369–376 are extracellular; sequence KHPATRTV. A helical transmembrane segment spans residues 377–397; it reads LHSGWEPVITAMVISSIGGLI. Residues 398–406 are Cytoplasmic-facing; the sequence is LDTTVSDPN. Residues 407–427 form a helical membrane-spanning segment; the sequence is LVGIVVYTPVINGIGGNLVAI. Residues 428–469 lie on the Extracellular side of the membrane; that stretch reads QASRISTYLHLHSIPGELPDEPKGCYYPFRTFFGPGVNNKSA. Residues 470 to 490 form a helical membrane-spanning segment; the sequence is QVLLLLVIPGHLIFLYTIHLM. Residues 491-498 lie on the Cytoplasmic side of the membrane; the sequence is KSGHTSLT. A helical transmembrane segment spans residues 499–519; that stretch reads IIFIVVYLFGAVLQVFTLLWI. Topologically, residues 520 to 543 are extracellular; the sequence is ADWMVHHFWRKGKDPDSFSIPYLT. The chain crosses the membrane as a helical span at residues 544–564; that stretch reads ALGDLLGTALLALSFHFLWLI. The Cytoplasmic portion of the chain corresponds to 565–573; sequence GDRDGDVGD.

It belongs to the SLC41A transporter family.

It is found in the cell membrane. It catalyses the reaction Mg(2+)(in) = Mg(2+)(out). The catalysed reaction is Mn(2+)(in) = Mn(2+)(out). The enzyme catalyses Co(2+)(in) = Co(2+)(out). It carries out the reaction Ni(2+)(in) = Ni(2+)(out). It catalyses the reaction Fe(2+)(in) = Fe(2+)(out). Acts as a plasma-membrane magnesium transporter. Can also mediate the transport of other divalent metal cations in an order of Ba(2+) &gt; Ni(2+) &gt; Co(2+) &gt; Fe(2+) &gt; Mn(2+). This is Solute carrier family 41 member 2 (SLC41A2) from Homo sapiens (Human).